The primary structure comprises 83 residues: UPF0512 protein W (83 aa).

Belongs to the UPF0512 family.

The sequence is that of UPF0512 protein W from Dictyostelium discoideum (Social amoeba).